A 402-amino-acid chain; its full sequence is Mitochondrial inner membrane protein OXA1 (402 aa).

A mitochondrion-targeting transit peptide spans 1 to 42; that stretch reads MFKLTSRLVTSRFAASSRLATARTIVLPRPHPSWISFQAKRF. Residues 43–118 are Mitochondrial intermembrane-facing; sequence NSTGPNANDV…PSDIIQHVLE (76 aa). A helical transmembrane segment spans residues 119–139; the sequence is AVHVYSGLPWWGTIAATTILI. Residues 140-199 are Mitochondrial matrix-facing; sequence RCLMFPLYVKSSDTVARNSHIKPELDALNNKLMSTTDLQQGQLVAMQRKKLLSSHGIKNR. The helical transmembrane segment at 200–220 threads the bilayer; sequence WLAAPMLQIPIALGFFNALRH. At 221–239 the chain is on the mitochondrial intermembrane side; that stretch reads MANYPVDGFANQGVAWFTD. A helical membrane pass occupies residues 240–260; that stretch reads LTQADPYLGLQVITAAVFISF. At 261–275 the chain is on the mitochondrial matrix side; sequence TRLGGETGAQQFSSP. Residues 276-292 traverse the membrane as a helical segment; it reads MKRLFTILPIISIPATM. Over 293 to 297 the chain is Mitochondrial intermembrane; the sequence is NLSSA. A helical membrane pass occupies residues 298-316; that stretch reads VVLYFAFNGAFSVLQTMIL. Residues 317-402 lie on the Mitochondrial matrix side of the membrane; sequence RNKWVRSKLK…HKSNFINNKK (86 aa). Residues 366 to 385 are compositionally biased toward basic and acidic residues; it reads RQLMQDNEKKLQESFKEKRQ. The disordered stretch occupies residues 366–386; it reads RQLMQDNEKKLQESFKEKRQN.

This sequence belongs to the OXA1/ALB3/YidC family. Interacts with the large ribosome subunit of mitochondrial ribosome. Interacts directly with MRP20. Interacts with OXA1.

The protein localises to the mitochondrion inner membrane. Its function is as follows. Mitochondrial inner membrane insertase that mediates the insertion of both mitochondrion-encoded precursors and nuclear-encoded proteins from the matrix into the inner membrane. Links mitoribosomes with the inner membrane. Forms pores capable of accommodating translocating protein segments. Essential for the activity and assembly of cytochrome c oxidase. Plays a central role in the translocation and export of the N-terminal part of the COX2 protein into the mitochondrial intermembrane space. The protein is Mitochondrial inner membrane protein OXA1 of Saccharomyces cerevisiae (strain ATCC 204508 / S288c) (Baker's yeast).